The sequence spans 311 residues: E3 ubiquitin-protein ligase RNF126 (311 aa).

Position 2 is an N-acetylalanine (alanine 2). Serine 5 carries the post-translational modification Phosphoserine. Residues 5-100 form a required for interaction with BAG6 region; sequence SPHPGRYFCH…FEIPTFPPGA (96 aa). Positions 13, 16, 29, and 32 each coordinate Zn(2+). A C4-type zinc finger spans residues 13–32; it reads CHCCSVEIVPRLPDYICPRC. Disordered regions lie at residues 42-64 and 94-132; these read EETR…SRPP and PTFP…ARLT. A compositionally biased stretch (polar residues) spans 47–61; the sequence is TENGSAPSTAPTDQS. Residues 103-116 show a composition bias toward basic and acidic residues; the sequence is DDGRDPESRRERDH. A compositionally biased stretch (basic residues) spans 117–132; sequence PSRHRYGARQPRARLT. The sufficient for interaction with AICDA stretch occupies residues 200–304; sequence TGPPPADKEK…SSSSSSSPSN (105 aa). An RING-type zinc finger spans residues 229-270; it reads CPVCKDDYALGERVRQLPCNHLFHDGCIVPWLEQHDSCPVCR. The segment at 277–311 is disordered; the sequence is NTATNPPGLTGVSFSSSSSSSSSSSPSNENATSNS. Over residues 289–311 the composition is skewed to low complexity; that stretch reads SFSSSSSSSSSSSPSNENATSNS.

In terms of assembly, interacts with CCDC50, EGFR, FLT3 and SCAMP3. Interacts with BAG6 (via ubiquitin-like domain); required for BAG6-dependent ubiquitination of proteins mislocalized to the cytosol. Interacts with CDKN1A. Interacts with AICDA. Ubiquitinated. May undergo autoubiquitination. In terms of tissue distribution, highly expressed in liver and testis.

It localises to the cytoplasm. It is found in the nucleus. It catalyses the reaction S-ubiquitinyl-[E2 ubiquitin-conjugating enzyme]-L-cysteine + [acceptor protein]-L-lysine = [E2 ubiquitin-conjugating enzyme]-L-cysteine + N(6)-ubiquitinyl-[acceptor protein]-L-lysine.. Its pathway is protein modification; protein ubiquitination. In terms of biological role, E3 ubiquitin-protein ligase that mediates ubiquitination oF target proteins. Depending on the associated E2 ligase, mediates 'Lys-27'-, 'Lys-29'-, 'Lys-48'- and/or 'Lys-63'-linked polyubiquitination of substrates. Part of a BAG6-dependent quality control process ensuring that proteins of the secretory pathway that are mislocalized to the cytosol are degraded by the proteasome. Probably acts by providing the ubiquitin ligase activity associated with the BAG6 complex and be responsible for ubiquitination of the hydrophobic mislocalized proteins and their targeting to the proteasome. May also play a role in the endosomal recycling of IGF2R, the cation-independent mannose-6-phosphate receptor. May play a role in the endosomal sorting and degradation of several membrane receptors including EGFR, FLT3, MET and CXCR4, by mediating their ubiquitination. By ubiquitinating CDKN1A/p21 and targeting it for degradation, may also promote cell proliferation. May monoubiquitinate AICDA. Acts as a regulator of DNA repair by mediating 'Lys-27'- and 'Lys-29'-linked polyubiquitination of MRE11, thereby promoting the exonuclease activity of MRE11. The protein is E3 ubiquitin-protein ligase RNF126 of Homo sapiens (Human).